The chain runs to 60 residues: UPF0434 protein Pnap_1922 (60 aa).

It belongs to the UPF0434 family.

This chain is UPF0434 protein Pnap_1922, found in Polaromonas naphthalenivorans (strain CJ2).